A 189-amino-acid polypeptide reads, in one-letter code: Peptidyl-tRNA hydrolase (189 aa).

A tRNA-binding site is contributed by Tyr14. Catalysis depends on His19, which acts as the Proton acceptor. Phe64, Asn66, and Asn112 together coordinate tRNA.

This sequence belongs to the PTH family. In terms of assembly, monomer.

It is found in the cytoplasm. It carries out the reaction an N-acyl-L-alpha-aminoacyl-tRNA + H2O = an N-acyl-L-amino acid + a tRNA + H(+). Its function is as follows. Hydrolyzes ribosome-free peptidyl-tRNAs (with 1 or more amino acids incorporated), which drop off the ribosome during protein synthesis, or as a result of ribosome stalling. Catalyzes the release of premature peptidyl moieties from peptidyl-tRNA molecules trapped in stalled 50S ribosomal subunits, and thus maintains levels of free tRNAs and 50S ribosomes. This Zymomonas mobilis subsp. mobilis (strain ATCC 31821 / ZM4 / CP4) protein is Peptidyl-tRNA hydrolase.